The sequence spans 141 residues: Large ribosomal subunit protein uL16 (141 aa).

Over residues 1–17 (MLQPKRTKYRKVQKGRM) the composition is skewed to basic residues. The disordered stretch occupies residues 1–29 (MLQPKRTKYRKVQKGRMKGNSQRGHELSN).

This sequence belongs to the universal ribosomal protein uL16 family. In terms of assembly, part of the 50S ribosomal subunit.

Functionally, binds 23S rRNA and is also seen to make contacts with the A and possibly P site tRNAs. The sequence is that of Large ribosomal subunit protein uL16 from Flavobacterium johnsoniae (strain ATCC 17061 / DSM 2064 / JCM 8514 / BCRC 14874 / CCUG 350202 / NBRC 14942 / NCIMB 11054 / UW101) (Cytophaga johnsonae).